The sequence spans 195 residues: Porimin (195 aa).

Residues 1–23 (MALCARAALLLGVLQVLALLGAA) form the signal peptide. The Extracellular portion of the chain corresponds to 24 to 152 (QDPTDAQGSA…PTKGKGSKFD (129 aa)). N-linked (GlcNAc...) asparagine glycosylation is found at Asn-36, Asn-45, Asn-51, Asn-59, Asn-109, and Asn-115. Positions 99–127 (VTPTASKSTPNASASPNSTHTSASMTTPA) are disordered. Polar residues predominate over residues 101–126 (PTASKSTPNASASPNSTHTSASMTTP). A helical membrane pass occupies residues 153 to 173 (AGSFVGGIVLTLGVLSILYIG). The Cytoplasmic segment spans residues 174–195 (CKMYYSRRGIRYRSIDEHDAII). Residue Ser-187 is modified to Phosphoserine.

The protein belongs to the CD164 family.

It is found in the membrane. Functionally, implicated in oncotic cell death, characterized by cell swelling, organelle swelling, vacuolization and increased membrane permeability. This Mus musculus (Mouse) protein is Porimin (Tmem123).